We begin with the raw amino-acid sequence, 181 residues long: Oligoribonuclease (181 aa).

The region spanning Leu8 to Leu171 is the Exonuclease domain. Residue Tyr129 is part of the active site.

This sequence belongs to the oligoribonuclease family.

The protein resides in the cytoplasm. 3'-to-5' exoribonuclease specific for small oligoribonucleotides. This is Oligoribonuclease from Pseudoalteromonas atlantica (strain T6c / ATCC BAA-1087).